The primary structure comprises 1034 residues: Isoleucine--tRNA ligase (1034 aa).

Positions 48–58 (PTANGKPHIGH) match the 'HIGH' region motif. The short motif at 588–592 (KMSKH) is the 'KMSKS' region element. An ATP-binding site is contributed by lysine 591.

The protein belongs to the class-I aminoacyl-tRNA synthetase family. IleS type 2 subfamily. As to quaternary structure, monomer. Zn(2+) serves as cofactor.

It is found in the cytoplasm. The catalysed reaction is tRNA(Ile) + L-isoleucine + ATP = L-isoleucyl-tRNA(Ile) + AMP + diphosphate. In terms of biological role, catalyzes the attachment of isoleucine to tRNA(Ile). As IleRS can inadvertently accommodate and process structurally similar amino acids such as valine, to avoid such errors it has two additional distinct tRNA(Ile)-dependent editing activities. One activity is designated as 'pretransfer' editing and involves the hydrolysis of activated Val-AMP. The other activity is designated 'posttransfer' editing and involves deacylation of mischarged Val-tRNA(Ile). The sequence is that of Isoleucine--tRNA ligase from Clostridium kluyveri (strain ATCC 8527 / DSM 555 / NBRC 12016 / NCIMB 10680 / K1).